We begin with the raw amino-acid sequence, 319 residues long: Acetyl-coenzyme A carboxylase carboxyl transferase subunit alpha (319 aa).

A CoA carboxyltransferase C-terminal domain is found at 43–296; the sequence is LRDKSIELTR…KKQLLFDLSE (254 aa).

Belongs to the AccA family. As to quaternary structure, acetyl-CoA carboxylase is a heterohexamer composed of biotin carboxyl carrier protein (AccB), biotin carboxylase (AccC) and two subunits each of ACCase subunit alpha (AccA) and ACCase subunit beta (AccD).

The protein localises to the cytoplasm. It carries out the reaction N(6)-carboxybiotinyl-L-lysyl-[protein] + acetyl-CoA = N(6)-biotinyl-L-lysyl-[protein] + malonyl-CoA. It participates in lipid metabolism; malonyl-CoA biosynthesis; malonyl-CoA from acetyl-CoA: step 1/1. Functionally, component of the acetyl coenzyme A carboxylase (ACC) complex. First, biotin carboxylase catalyzes the carboxylation of biotin on its carrier protein (BCCP) and then the CO(2) group is transferred by the carboxyltransferase to acetyl-CoA to form malonyl-CoA. This is Acetyl-coenzyme A carboxylase carboxyl transferase subunit alpha from Baumannia cicadellinicola subsp. Homalodisca coagulata.